The following is a 619-amino-acid chain: Dihydroxy-acid dehydratase (619 aa).

Asp81 contributes to the Mg(2+) binding site. Cys122 provides a ligand contact to [2Fe-2S] cluster. Asp123 and Lys124 together coordinate Mg(2+). Lys124 is modified (N6-carboxylysine). Cys195 lines the [2Fe-2S] cluster pocket. Glu494 contacts Mg(2+). Catalysis depends on Ser520, which acts as the Proton acceptor.

The protein belongs to the IlvD/Edd family. In terms of assembly, homodimer. It depends on [2Fe-2S] cluster as a cofactor. The cofactor is Mg(2+).

The catalysed reaction is (2R)-2,3-dihydroxy-3-methylbutanoate = 3-methyl-2-oxobutanoate + H2O. The enzyme catalyses (2R,3R)-2,3-dihydroxy-3-methylpentanoate = (S)-3-methyl-2-oxopentanoate + H2O. The protein operates within amino-acid biosynthesis; L-isoleucine biosynthesis; L-isoleucine from 2-oxobutanoate: step 3/4. It participates in amino-acid biosynthesis; L-valine biosynthesis; L-valine from pyruvate: step 3/4. Its function is as follows. Functions in the biosynthesis of branched-chain amino acids. Catalyzes the dehydration of (2R,3R)-2,3-dihydroxy-3-methylpentanoate (2,3-dihydroxy-3-methylvalerate) into 2-oxo-3-methylpentanoate (2-oxo-3-methylvalerate) and of (2R)-2,3-dihydroxy-3-methylbutanoate (2,3-dihydroxyisovalerate) into 2-oxo-3-methylbutanoate (2-oxoisovalerate), the penultimate precursor to L-isoleucine and L-valine, respectively. This chain is Dihydroxy-acid dehydratase, found in Shewanella putrefaciens (strain CN-32 / ATCC BAA-453).